The chain runs to 547 residues: Phosphomethylpyrimidine synthase (547 aa).

Substrate contacts are provided by residues Asn-150, Met-179, Tyr-208, His-244, 264–266, 305–308, and Glu-344; these read SRG and DGLR. His-348 contacts Zn(2+). Tyr-371 provides a ligand contact to substrate. His-412 provides a ligand contact to Zn(2+). The [4Fe-4S] cluster site is built by Cys-492, Cys-495, and Cys-500.

Belongs to the ThiC family. [4Fe-4S] cluster serves as cofactor.

The catalysed reaction is 5-amino-1-(5-phospho-beta-D-ribosyl)imidazole + S-adenosyl-L-methionine = 4-amino-2-methyl-5-(phosphooxymethyl)pyrimidine + CO + 5'-deoxyadenosine + formate + L-methionine + 3 H(+). It functions in the pathway cofactor biosynthesis; thiamine diphosphate biosynthesis. Catalyzes the synthesis of the hydroxymethylpyrimidine phosphate (HMP-P) moiety of thiamine from aminoimidazole ribotide (AIR) in a radical S-adenosyl-L-methionine (SAM)-dependent reaction. The chain is Phosphomethylpyrimidine synthase from Nocardia farcinica (strain IFM 10152).